Consider the following 560-residue polypeptide: Potassium-transporting ATPase potassium-binding subunit (560 aa).

The next 12 membrane-spanning stretches (helical) occupy residues 11–31, 63–83, 134–154, 179–199, 254–274, 282–302, 329–349, 356–376, 379–399, 417–437, 488–508, and 530–550; these read IFLLLIVIAVPLGKYLYVAFF, SYCTALLIVNAALLGISYGLL, FVTMMMFTSAATGLTVATALI, LLPLSVIVTILLVAFGVPQTF, VIEMLSMWCIPAALPFTYGHA, WVLFATMFVLFVMMLGVVYNA, FGIPLSSLFTAITTAATTGSV, LTPIGGLVPLALMMLNNVFGG, VGFVNIMMYAMIAVFLSGLMV, LIVIALLLHPLIILAPSAIAL, VVMLLGRYVSIIAMLAVAGSL, and VILFGTVFIIGALTFFPVLIL.

This sequence belongs to the KdpA family. The system is composed of three essential subunits: KdpA, KdpB and KdpC.

The protein localises to the cell membrane. In terms of biological role, part of the high-affinity ATP-driven potassium transport (or Kdp) system, which catalyzes the hydrolysis of ATP coupled with the electrogenic transport of potassium into the cytoplasm. This subunit binds the extracellular potassium ions and delivers the ions to the membrane domain of KdpB through an intramembrane tunnel. The polypeptide is Potassium-transporting ATPase potassium-binding subunit (Geobacillus kaustophilus (strain HTA426)).